Reading from the N-terminus, the 121-residue chain is Large-conductance mechanosensitive channel (121 aa).

The next 2 membrane-spanning stretches (helical) occupy residues 14-34 and 67-87; these read VLDLAVGVIIGAAFTALVKSL and GAFLNDVINFVITAFVIFVLI.

Belongs to the MscL family. Homopentamer.

It localises to the cell membrane. Functionally, channel that opens in response to stretch forces in the membrane lipid bilayer. May participate in the regulation of osmotic pressure changes within the cell. The chain is Large-conductance mechanosensitive channel from Lactococcus lactis subsp. cremoris (strain SK11).